A 241-amino-acid polypeptide reads, in one-letter code: Peroxisomal membrane protein 11C (241 aa).

The Cytoplasmic portion of the chain corresponds to 1 to 122; the sequence is MALLNRLASA…ADAKVLRVDS (122 aa). A helical transmembrane segment spans residues 123 to 149; that stretch reads AWWWTLNTALWTLSLLLGAVKALWTML. The Lumenal portion of the chain corresponds to 150-211; it reads KLRQKLRSPT…GVLWAGRFPP (62 aa). A helical transmembrane segment spans residues 212–227; the sequence is WLVGLMGTISSILSTC. Topologically, residues 228–241 are cytoplasmic; the sequence is QAVRAGRQAEADSP.

It belongs to the peroxin-11 family. Homodimer. Heterodimer with either PEX11A or PEX11B. Interacts with FIS1. Expressed in liver and at much lower levels in heart, kidney and testis.

It is found in the peroxisome membrane. Promotes membrane protrusion and elongation on the peroxisomal surface. The polypeptide is Peroxisomal membrane protein 11C (Pex11g) (Mus musculus (Mouse)).